The sequence spans 834 residues: Periplasmic nitrate reductase (834 aa).

Residues Met1 to Ala31 constitute a signal peptide (tat-type signal). Positions Ile43 to Asp99 constitute a 4Fe-4S Mo/W bis-MGD-type domain. The [4Fe-4S] cluster site is built by Cys50, Cys53, Cys57, and Cys85. Mo-bis(molybdopterin guanine dinucleotide) contacts are provided by residues Lys87, Gln154, Asn179, Cys183, Trp216 to Met223, Ser247 to His251, Gly266 to Asp268, Met377, Gln381, Asn487, Ser513 to Asp514, Lys536, Asp563, and Thr723 to Ser732. Residue Trp799 participates in substrate binding. Residues Asn807 and Lys824 each contribute to the Mo-bis(molybdopterin guanine dinucleotide) site.

Belongs to the prokaryotic molybdopterin-containing oxidoreductase family. NasA/NapA/NarB subfamily. As to quaternary structure, component of the periplasmic nitrate reductase NapAB complex composed of NapA and NapB. [4Fe-4S] cluster is required as a cofactor. The cofactor is Mo-bis(molybdopterin guanine dinucleotide). Post-translationally, predicted to be exported by the Tat system. The position of the signal peptide cleavage has not been experimentally proven.

The protein localises to the periplasm. The catalysed reaction is 2 Fe(II)-[cytochrome] + nitrate + 2 H(+) = 2 Fe(III)-[cytochrome] + nitrite + H2O. Functionally, catalytic subunit of the periplasmic nitrate reductase complex NapAB. Receives electrons from NapB and catalyzes the reduction of nitrate to nitrite. The protein is Periplasmic nitrate reductase of Rhizobium meliloti (strain 1021) (Ensifer meliloti).